Consider the following 614-residue polypeptide: Glucosidase 2 subunit beta (614 aa).

The first 19 residues, 1–19 (MGLHAILLLLLLRISASAA), serve as a signal peptide directing secretion. N115 carries N-linked (GlcNAc...) asparagine glycosylation. Basic and acidic residues-rich tracts occupy residues 194-222 (EEER…KKAS), 231-272 (QENH…HDPE), and 324-351 (TGEK…HSEE). A disordered region spans residues 194-396 (EEERLRKEKE…SHESDDEYVD (203 aa)). Over residues 352 to 364 (THEDESDVPESAE) the composition is skewed to acidic residues. Residues 372–382 (SEVEDDRHKYD) are compositionally biased toward basic and acidic residues. Positions 383–396 (DEDFSHESDDEYVD) are enriched in acidic residues. An MRH domain is found at 497 to 592 (DQCFESKEGK…VLSTPALCDE (96 aa)). 3 disulfides stabilise this stretch: C499-C512, C549-C578, and C563-C590.

Heterodimer of a catalytic alpha subunit and a beta subunit.

Its subcellular location is the endoplasmic reticulum. Its pathway is glycan metabolism; N-glycan metabolism. In terms of biological role, regulatory subunit of glucosidase II. May be required for defense response elicited by pathogen-associated molecular patterns (PAMPs). The sequence is that of Glucosidase 2 subunit beta from Oryza sativa subsp. japonica (Rice).